The chain runs to 281 residues: Large ribosomal subunit protein uL2 (281 aa).

A disordered region spans residues 213 to 281 (RNRHKGIRPT…LIIRRRKESK (69 aa)).

This sequence belongs to the universal ribosomal protein uL2 family. As to quaternary structure, part of the 50S ribosomal subunit. Forms a bridge to the 30S subunit in the 70S ribosome.

One of the primary rRNA binding proteins. Required for association of the 30S and 50S subunits to form the 70S ribosome, for tRNA binding and peptide bond formation. It has been suggested to have peptidyltransferase activity; this is somewhat controversial. Makes several contacts with the 16S rRNA in the 70S ribosome. This chain is Large ribosomal subunit protein uL2, found in Mycoplasmopsis pulmonis (strain UAB CTIP) (Mycoplasma pulmonis).